A 437-amino-acid polypeptide reads, in one-letter code: Ribosomal protein uS12 methylthiotransferase RimO (437 aa).

The MTTase N-terminal domain maps to 3–114 (ATIAVTHLGC…IVEVVERSRT (112 aa)). Residues cysteine 12, cysteine 48, cysteine 77, cysteine 152, cysteine 156, and cysteine 159 each contribute to the [4Fe-4S] cluster site. The region spanning 138–367 (TTTEAVAYLK…MRLQQTISQR (230 aa)) is the Radical SAM core domain. Positions 370 to 436 (ASQVGRVVPV…PYDLCGEVFQ (67 aa)) constitute a TRAM domain.

Belongs to the methylthiotransferase family. RimO subfamily. Requires [4Fe-4S] cluster as cofactor.

It localises to the cytoplasm. The catalysed reaction is L-aspartate(89)-[ribosomal protein uS12]-hydrogen + (sulfur carrier)-SH + AH2 + 2 S-adenosyl-L-methionine = 3-methylsulfanyl-L-aspartate(89)-[ribosomal protein uS12]-hydrogen + (sulfur carrier)-H + 5'-deoxyadenosine + L-methionine + A + S-adenosyl-L-homocysteine + 2 H(+). In terms of biological role, catalyzes the methylthiolation of an aspartic acid residue of ribosomal protein uS12. In Gloeobacter violaceus (strain ATCC 29082 / PCC 7421), this protein is Ribosomal protein uS12 methylthiotransferase RimO.